Reading from the N-terminus, the 290-residue chain is MVRNLKIAIPNKGRLQQPTLQFLQSVGIKPLASDDRALIVPTSWEGVQLVMIRTEDIPNIVETGATELGITGHDYVIESSADVEELIKLDFGRSKIVLAVPQTWRENSVDELKGKEFRVATKYYNIAKEYVRRRELNAKVVKISGAAEVMPSLGAAEAIIDVMSTGTTLKLHGLKAIDVIMDSYAVVIGNRNWIKNDEADRINLLLTMMKGAIAAKGKKMIFMNVPDNKLDGVINSLPAMLAPAITRLSRSDIWEVITVAEEDILPEVIAKVKAAGARDIVVIDIEKVVK.

It belongs to the ATP phosphoribosyltransferase family. Long subfamily. It depends on Mg(2+) as a cofactor.

It localises to the cytoplasm. It catalyses the reaction 1-(5-phospho-beta-D-ribosyl)-ATP + diphosphate = 5-phospho-alpha-D-ribose 1-diphosphate + ATP. Its pathway is amino-acid biosynthesis; L-histidine biosynthesis; L-histidine from 5-phospho-alpha-D-ribose 1-diphosphate: step 1/9. Its activity is regulated as follows. Feedback inhibited by histidine. Catalyzes the condensation of ATP and 5-phosphoribose 1-diphosphate to form N'-(5'-phosphoribosyl)-ATP (PR-ATP). Has a crucial role in the pathway because the rate of histidine biosynthesis seems to be controlled primarily by regulation of HisG enzymatic activity. The chain is ATP phosphoribosyltransferase (hisG) from Saccharolobus solfataricus (strain ATCC 35092 / DSM 1617 / JCM 11322 / P2) (Sulfolobus solfataricus).